The sequence spans 758 residues: MAQTTLKPIVLSILLINTPLLAQAHETEQSVDLETVSVVGKSRPRATSGLLHTSTASDKIISGDTLRQKAVNLGDALDGVPGIHASQYGGGASAPVIRGQTGRRIKVLNHHGETGDMADFSPDHAIMVDTALSQQVEILRGPVTLLYSSGNVAGLVDVADGKIPEKMPENGVSGELGLRLSSGNLEKLTSGGINIGLGKNFVLHTEGLYRKSGDYAVPRYRNLKRLPDSHADSQTGSIGLSWVGEKGFIGVAYSDRRDQYGLPAHSHEYDDCHADIIWQKSLINKRYLQLYPHLLTEEDIDYDNPGLSCGFHDDDNAHAHTHSGRPWIDLRNKRYELRAEWKQPFPGFEALRVHLNRNDYRHDEKAGDAVENFFNNQTQNARIELRHQPIGRLKGSWGVQYLQQKSSALSAISEAVKQPMLLDNKVQHYSFFGVEQANWDNFTLEGGVRVEKQKASIQYDKALIDRENYYNHPLPDLGAHRQTARSFALSGNWYFTPQHKLSLTASHQERLPSTQELYAHGKHVATNTFEVGNKHLNKERSNNIELALGYEGDRWQYNLALYRNRFGNYIYAQTLNDGRGPKSIEDDSEMKLVRYNQSGADFYGAEGEIYFKPTPRYRIGVSGDYVRGRLKNLPSLPGREDAYGNRPFIAQDDQNAPRVPAARLGFHLKASLTDRIDANLDYYRVFAQNKLARYETRTPGHHMLNLGANYRRNTRYGEWNWYVKADNLLNQSVYAHSSFLSDTPQMGRSFTGGVNVKF.

The first 24 residues, 1–24 (MAQTTLKPIVLSILLINTPLLAQA), serve as a signal peptide directing secretion. The region spanning 50-161 (LLHTSTASDK…VAGLVDVADG (112 aa)) is the TBDR plug domain. Residues 171–758 (GVSGELGLRL…SFTGGVNVKF (588 aa)) form the TBDR beta-barrel domain. Residues 741–758 (SDTPQMGRSFTGGVNVKF) carry the TonB C-terminal box motif.

This sequence belongs to the TonB-dependent receptor family.

The protein localises to the cell outer membrane. Probable receptor, TonB-dependent. This chain is Probable TonB-dependent receptor NMB0964, found in Neisseria meningitidis serogroup B (strain ATCC BAA-335 / MC58).